Reading from the N-terminus, the 268-residue chain is D-alanyl-D-alanine carboxypeptidase (268 aa).

The helical transmembrane segment at 25 to 47 threads the bilayer; the sequence is AFLWAFIISFTVCTLFLGWRLVS. Residues glutamine 151, 179 to 181, and serine 186 each bind substrate; that span reads WVA. Zn(2+)-binding residues include histidine 188 and aspartate 195. Catalysis depends on glutamate 238, which acts as the Proton donor/acceptor. Position 241 (histidine 241) interacts with Zn(2+).

It belongs to the peptidase M15B family. In terms of assembly, monomer. Zn(2+) is required as a cofactor.

It localises to the cell membrane. Carboxypeptidase activity is insensitive to beta-lactams since it is not affected by penicillin G or ampicillin and is inhibited only by very high concentrations of cefalotin and cefoxitin. Functionally, carboxypeptidase that cleaves the C-terminal D-alanine residue from the peptidoglycan-derived pentapeptide L-Ala-gamma-D-Glu-L-Lys-D-Ala-D-Ala in vitro. Therefore, should contribute in vivo to the hydrolysis of the D-alanyl-D-alanine-containing peptidoglycan precursors. May increase the level of glycopeptide antibiotics resistance by decreasing the availability of D-Ala-D-Ala termini from the cell surface, which constitute the antibiotic target residues. The protein is D-alanyl-D-alanine carboxypeptidase of Enterococcus faecalis (strain ATCC 700802 / V583).